A 40-amino-acid chain; its full sequence is Natriuretic peptide PtNP-a (40 aa).

C9 and C25 are disulfide-bonded. Residues 17–34 (ISNTSGMGCRNPIQNRPK) show a composition bias toward polar residues. The segment at 17–40 (ISNTSGMGCRNPIQNRPKSTPGGS) is disordered.

The protein belongs to the natriuretic peptide family. As to expression, expressed by the venom gland.

Its subcellular location is the secreted. In terms of biological role, snake venom natriuretic peptide that targets NPR1 and possibly NPR2. Exhibits hypotensive and vasodepressor activities. Recombinant PtNP-a demonstrates a dose-dependent stimulation of cGMP production via the natriuretic peptide receptor 1 (NPR1) (EC(50)=563 nM) in Madine Darby Canine Kidney (MDCK) cells. It also inhibits the angiotensin converting enzyme (ACE). The polypeptide is Natriuretic peptide PtNP-a (Pseudonaja textilis (Eastern brown snake)).